The chain runs to 363 residues: G-protein coupled receptor 6 (363 aa).

Topologically, residues 1-75 (MNASAAALNE…SGLLLSAVNP (75 aa)) are extracellular. N2 and N9 each carry an N-linked (GlcNAc...) asparagine glycan. Residues 29-48 (GAPDTGEWGPPAASAALGGG) are disordered. Residue N52 is glycosylated (N-linked (GlcNAc...) asparagine). The chain crosses the membrane as a helical span at residues 76–95 (WDVLLCVSGTVIAGENALVV). At 96–107 (ALIASTPALRTP) the chain is on the cytoplasmic side. A helical membrane pass occupies residues 108-131 (MFVLVGSLATADLLAGCGLILHFV). Over 132-143 (FQYVVPSETVSL) the chain is Extracellular. Residues 144-165 (LMVGFLVASFAASVSSLLAITV) form a helical membrane-spanning segment. Topologically, residues 166 to 186 (DRYLSLYNALTYYSRRTLLGV) are cytoplasmic. Residues 187–206 (HLLLAATWTVSLGLGLLPVL) form a helical membrane-spanning segment. Residues 207 to 231 (GWNCLADRTSCSVVRPLTRSHVALL) are Extracellular-facing. Residues 232–250 (STSFFVVFGIMLHLYVRIC) form a helical membrane-spanning segment. The Cytoplasmic segment spans residues 251–278 (QVVWRHAHQIALQQHCLAPPHLAATRKG). Residues 279 to 305 (VGTLAVVLGTFGASWLPFAIYCVVGSQ) form a helical membrane-spanning segment. The Extracellular segment spans residues 306 to 310 (EDPAI). The helical transmembrane segment at 311–332 (YTYATLLPATYNSMINPIIYAF) threads the bilayer. The Cytoplasmic segment spans residues 333 to 363 (RNQEIQRALWLLFCGCFQSKVPFRSRSPSEV). The S-palmitoyl cysteine moiety is linked to residue C346. 3 positions are modified to phosphoserine: S357, S359, and S361.

It belongs to the G-protein coupled receptor 1 family. Mainly expressed in the brain. Selectively expressed in striatopallidal neurons in the striatum.

The protein localises to the cell membrane. Orphan receptor with constitutive G(s) signaling activity that activate cyclic AMP. Promotes neurite outgrowth and blocks myelin inhibition in neurons. The chain is G-protein coupled receptor 6 (Gpr6) from Mus musculus (Mouse).